The chain runs to 277 residues: Probable endonuclease 4 (277 aa).

Zn(2+)-binding residues include His69, His109, Glu145, Asp179, His182, His214, Asp227, His229, and Glu259.

This sequence belongs to the AP endonuclease 2 family. Requires Zn(2+) as cofactor.

It carries out the reaction Endonucleolytic cleavage to 5'-phosphooligonucleotide end-products.. Its function is as follows. Endonuclease IV plays a role in DNA repair. It cleaves phosphodiester bonds at apurinic or apyrimidinic (AP) sites, generating a 3'-hydroxyl group and a 5'-terminal sugar phosphate. This is Probable endonuclease 4 from Bacteroides thetaiotaomicron (strain ATCC 29148 / DSM 2079 / JCM 5827 / CCUG 10774 / NCTC 10582 / VPI-5482 / E50).